The chain runs to 189 residues: Pyridoxal 5'-phosphate synthase subunit PdxT (189 aa).

Residue 47 to 49 (GES) participates in L-glutamine binding. Residue Cys79 is the Nucleophile of the active site. L-glutamine contacts are provided by residues Arg106 and 135–136 (IR). Catalysis depends on charge relay system residues His171 and Glu173.

This sequence belongs to the glutaminase PdxT/SNO family. In the presence of PdxS, forms a dodecamer of heterodimers. Only shows activity in the heterodimer.

The catalysed reaction is aldehydo-D-ribose 5-phosphate + D-glyceraldehyde 3-phosphate + L-glutamine = pyridoxal 5'-phosphate + L-glutamate + phosphate + 3 H2O + H(+). It carries out the reaction L-glutamine + H2O = L-glutamate + NH4(+). It functions in the pathway cofactor biosynthesis; pyridoxal 5'-phosphate biosynthesis. Its function is as follows. Catalyzes the hydrolysis of glutamine to glutamate and ammonia as part of the biosynthesis of pyridoxal 5'-phosphate. The resulting ammonia molecule is channeled to the active site of PdxS. This chain is Pyridoxal 5'-phosphate synthase subunit PdxT, found in Thermoanaerobacter pseudethanolicus (strain ATCC 33223 / 39E) (Clostridium thermohydrosulfuricum).